We begin with the raw amino-acid sequence, 410 residues long: MDEGIPHLQERQLLEHRDFIGLDYSSLYMCKPKRSLKRDDTKDTYKLPHRLIEKKRRDRINECIAQLKDLLPEHLKLTTLGHLEKAVVLELTLKHLKALTALTEQQHQKIIALQNGERSLKSPVQADLDAFHSGFQTCAKEVLQYLARFESWTPREPRCAQLVSHLHAVATQLLTPQVTPGRGPGRAPCSAGAAAASGSERVARCVPVIQRTQPGTEPEHDTDTDSGYGGEAEQGRAAVKQEPPGDPSAAPKRLKLEARGALLGPEPALLGSLVALGGGAPFAQPAAAPFCLPFYLLSPSAAAYVQPWLDKSGLDKYLYPAAAAPFPLLYPGIPAAAAAAAAAAFPCLSSVLSPPPEKAGSAAGAPFLAHEVAPPGSLRPQHAHSRTHLPHAVNPESSQEDATQPAKDAP.

Lys31 is covalently cross-linked (Glycyl lysine isopeptide (Lys-Gly) (interchain with G-Cter in SUMO2)). The region spanning Thr44–Leu99 is the bHLH domain. Lys121 participates in a covalent cross-link: Glycyl lysine isopeptide (Lys-Gly) (interchain with G-Cter in SUMO2). Residues Phe131–Leu166 enclose the Orange domain. Disordered regions lie at residues Ile209–Pro251 and Glu371–Pro410. Lys240 is covalently cross-linked (Glycyl lysine isopeptide (Lys-Gly) (interchain with G-Cter in SUMO2)).

Homodimer. Heterodimer with BHLHE40/DEC1. Interacts with CIART. Interacts with BMAL1 and RXRA. Interacts with NR0B2 and HNF1A. As to expression, highly expressed in the caudate putamen, pineal gland, granular cell layer of the cerebellum, olfactory bulb, piriform cortex, hippocampus and hypothalamic nuclei. Moderately expressed in skeletal muscle, heart. Weakly expressed in lung.

It localises to the nucleus. Its function is as follows. Transcriptional repressor involved in the regulation of the circadian rhythm by negatively regulating the activity of the clock genes and clock-controlled genes. Acts as the negative limb of a novel autoregulatory feedback loop (DEC loop) which differs from the one formed by the PER and CRY transcriptional repressors (PER/CRY loop). Both these loops are interlocked as it represses the expression of PER1 and in turn is repressed by PER1/2 and CRY1/2. Represses the activity of the circadian transcriptional activator: CLOCK-BMAL1 heterodimer by competing for the binding to E-box elements (5'-CACGTG-3') found within the promoters of its target genes. Negatively regulates its own expression and the expression of DBP and BHLHE41/DEC2. Acts as a corepressor of RXR and the RXR-LXR heterodimers and represses the ligand-induced RXRA/B/G, NR1H3/LXRA, NR1H4 and VDR transactivation activity. Inhibits HNF1A-mediated transactivation of CYP1A2, CYP2E1 and CYP3A11. The polypeptide is Class E basic helix-loop-helix protein 41 (Bhlhb3) (Rattus norvegicus (Rat)).